Consider the following 601-residue polypeptide: Rhizobactin siderophore biosynthesis protein RhbF (601 aa).

The protein belongs to the IucA/IucC family.

The protein operates within siderophore biosynthesis; rhizobactin biosynthesis. In Rhizobium meliloti (strain 1021) (Ensifer meliloti), this protein is Rhizobactin siderophore biosynthesis protein RhbF (rhbF).